A 1744-amino-acid polypeptide reads, in one-letter code: Tensin-1 (1744 aa).

The interval 15 to 55 (SPAVNYELPSPGQSITKQVDTPDATRSPRGGQAHRKASRSM) is disordered. Positions 58-230 (TAAMESSCEL…HYFSGLLSGS (173 aa)) constitute a Phosphatase tensin-type domain. The 127-residue stretch at 235-361 (NKPLFLHHVI…GKVEFVFSYG (127 aa)) folds into the C2 tensin-type domain. Disordered stretches follow at residues 467–505 (TLSV…SPEE), 569–589 (DELP…SSLD), 666–686 (AQEH…PAWL), 724–797 (PQAP…APSR), 934–956 (GSQQ…QLPH), 982–1077 (RVAG…PGLA), and 1156–1437 (VPSP…GSAV). The span at 468–481 (LSVSSDSGNSTAST) shows a compositional bias: polar residues. Low complexity predominate over residues 580–589 (GSLGTLSSLD). The segment covering 728–753 (ARSTSSREAVQRGLNSWQQQGGSRPP) has biased composition (polar residues). Residues 763 to 773 (SHSPSLSSCSP) show a composition bias toward low complexity. Pro residues predominate over residues 774 to 783 (QPSPLQPMPP). Basic and acidic residues-rich tracts occupy residues 1004–1014 (TPSDSHYEKSS) and 1041–1054 (RPKE…KEAF). Residues 1060–1069 (ASPSSLTSGG) are compositionally biased toward polar residues. Low complexity-rich tracts occupy residues 1156–1169 (VPSP…IHSV) and 1208–1220 (SAHS…SPSS). Composition is skewed to polar residues over residues 1344 to 1355 (LSRQSSASGYQP), 1370 to 1380 (GTSTPHSSSPD), and 1405 to 1420 (ERSN…NGKA). Residues 1421–1435 (SSPLSSGMSSPSSGS) are compositionally biased toward low complexity. In terms of domain architecture, SH2 spans 1472-1581 (WYKPDISREQ…ALPCKLVIPD (110 aa)). The 137-residue stretch at 1607 to 1743 (ACNVLFINSV…SRVMLGSGQK (137 aa)) folds into the PTB domain.

It belongs to the PTEN phosphatase protein family. As to quaternary structure, binds to actin filaments. Interacts with phosphotyrosine-containing proteins. In terms of processing, tyrosine phosphorylated. As to expression, heart, gizzard, lung and skeletal muscle.

The protein localises to the cell surface. It localises to the cell junction. Its subcellular location is the focal adhesion. It is found in the cytoplasm. The protein resides in the cytoskeleton. Functionally, may act as a protein phosphatase and/or a lipid phosphatase. Involved in fibrillar adhesion formation. Plays a role in cell polarization and migration. May be involved in cartilage development and in linking signal transduction pathways to the cytoskeleton. This Gallus gallus (Chicken) protein is Tensin-1 (TNS1).